We begin with the raw amino-acid sequence, 726 residues long: uncharacterized protein (726 aa).

Residues Ser-583 and His-698 each act as charge relay system in the active site.

The protein belongs to the peptidase S9B family.

This is an uncharacterized protein from Sinorhizobium fredii (strain NBRC 101917 / NGR234).